A 559-amino-acid chain; its full sequence is Polypeptide N-acetylgalactosaminyltransferase 1 (559 aa).

Topologically, residues 1–8 (MRKFAYCK) are cytoplasmic. The chain crosses the membrane as a helical; Signal-anchor for type II membrane protein span at residues 9 to 28 (VVLATSLVWVLLDMFLLLYF). The Lumenal portion of the chain corresponds to 29–559 (SECNKCEEKK…LRNVTLPEIF (531 aa)). Asn-95 is a glycosylation site (N-linked (GlcNAc...) asparagine). Disulfide bonds link Cys-106-Cys-339, Cys-330-Cys-408, Cys-442-Cys-459, Cys-482-Cys-497, and Cys-523-Cys-540. Residues 115-225 (LPTTSVVIVF…VGWLEPLLAR (111 aa)) form a catalytic subdomain A region. Substrate is bound by residues Asp-156 and Arg-186. Residues Asp-209 and His-211 each coordinate Mn(2+). A catalytic subdomain B region spans residues 285 to 347 (PVRTPTMAGG…TCSHVGHVFR (63 aa)). Trp-316 is a substrate binding site. His-344 provides a ligand contact to Mn(2+). Arg-347 and Tyr-352 together coordinate substrate. One can recognise a Ricin B-type lectin domain in the interval 429–551 (FSLGEIRNVE…GSRSQQWLLR (123 aa)). The N-linked (GlcNAc...) asparagine glycan is linked to Asn-552.

This sequence belongs to the glycosyltransferase 2 family. GalNAc-T subfamily. The cofactor is Mn(2+). As to expression, heart, brain, spleen, liver, skeletal muscle and kidney.

It localises to the golgi apparatus. It is found in the golgi stack membrane. The protein localises to the secreted. It carries out the reaction L-seryl-[protein] + UDP-N-acetyl-alpha-D-galactosamine = a 3-O-[N-acetyl-alpha-D-galactosaminyl]-L-seryl-[protein] + UDP + H(+). It catalyses the reaction L-threonyl-[protein] + UDP-N-acetyl-alpha-D-galactosamine = a 3-O-[N-acetyl-alpha-D-galactosaminyl]-L-threonyl-[protein] + UDP + H(+). Its pathway is protein modification; protein glycosylation. In terms of biological role, catalyzes the initial reaction in O-linked oligosaccharide biosynthesis, the transfer of an N-acetyl-D-galactosamine residue to a serine or threonine residue on the protein receptor. Has a broad spectrum of substrates such as apomucin-, MUC5AC-, MUC1- and MUC2-derived peptides. The sequence is that of Polypeptide N-acetylgalactosaminyltransferase 1 from Rattus norvegicus (Rat).